The chain runs to 227 residues: Terpene cyclase ltmB (227 aa).

7 helical membrane-spanning segments follow: residues 20–40 (LAETFVTFMGLGWLINYVLMI), 51–71 (MALIPLCNNIAWELVYTIIYP), 76–96 (VELAAFIAGVTLNFLIMTSAA), 113–133 (AGLIIVAGILMCFTGHVALAM), 135–155 (IGPALAYSWGAVICQLALSIG), 173–195 (LWSSRFLGSCCAVGFAFLRWRYW), and 206–226 (LILWSLATFLVADLTYGVCLL).

Belongs to the paxB family.

The protein localises to the membrane. It participates in secondary metabolite biosynthesis. In terms of biological role, terpene cyclase; part of the gene cluster that mediates the biosynthesis of lolitrems, indole-diterpene mycotoxins that are potent tremorgens in mammals, and are synthesized by clavicipitaceous fungal endophytes in association with their grass hosts. The geranylgeranyl diphosphate (GGPP) synthase ltmG is proposed to catalyze the first step in lolitrem biosynthesis. LtmG catalyzes a series of iterative condensations of isopentenyl diphosphate (IPP) with dimethylallyl diphosphate (DMAPP), geranyl diphosphate (GPP), and farnesyl diphosphate (FPP), to form GGPP. GGPP then condenses with indole-3-glycerol phosphate to form 3-geranylgeranylindole, an acyclic intermediate, to be incorporated into paxilline. Either ltmG or ltmC could be responsible for this step, as both are putative prenyl transferases. The FAD-dependent monooxygenase ltmM then catalyzes the epoxidation of the two terminal alkenes of the geranylgeranyl moiety, which is subsequently cyclized by ltmB, to paspaline. The cytochrome P450 monooxygenases ltmQ and ltmP can sequentially oxidize paspaline to terpendole E and terpendole F. Alternatively, ltmP converts paspaline to an intermediate which is oxidized by ltmQ to terpendole F. LtmF, ltmK, ltmE and ltmJ appear to be unique to the epichloe endophytes. The prenyltransferase ltmF is involved in the 27-hydroxyl-O-prenylation. The cytochrome P450 monooxygenase ltmK is required for the oxidative acetal ring formation. The multi-functional prenyltransferase ltmE is required for C20- and C21-prenylations of the indole ring of paspalanes and acts together with the cytochrome P450 monooxygenase ltmJ to yield lolitremanes by multiple oxidations and ring closures. The stereoisomer pairs of lolitriol and lolitrem N or lolitrem B and lolitrem F may be attributed to variations in the way in which ring closure can occur under the action of ltmJ. While the major product of this pathway is lolitrem B, the prenyl transferases and cytochrome P450 monooxygenases identified in this pathway have a remarkable versatility in their regio- and stereo-specificities to generate a diverse range of metabolites that are products of a metabolic grid rather than a linear pathway. The chain is Terpene cyclase ltmB from Epichloe festucae var. lolii (Neotyphodium lolii).